Consider the following 231-residue polypeptide: Orotidine 5'-phosphate decarboxylase (231 aa).

Residues D11, K33, 60 to 69 (DLKFHDIPNT), T117, R178, Q187, G207, and R208 each bind substrate. Residue K62 is the Proton donor of the active site.

It belongs to the OMP decarboxylase family. Type 1 subfamily. Homodimer.

It catalyses the reaction orotidine 5'-phosphate + H(+) = UMP + CO2. The protein operates within pyrimidine metabolism; UMP biosynthesis via de novo pathway; UMP from orotate: step 2/2. In terms of biological role, catalyzes the decarboxylation of orotidine 5'-monophosphate (OMP) to uridine 5'-monophosphate (UMP). The chain is Orotidine 5'-phosphate decarboxylase from Nitrosomonas europaea (strain ATCC 19718 / CIP 103999 / KCTC 2705 / NBRC 14298).